A 325-amino-acid polypeptide reads, in one-letter code: Probable pectate lyase B (325 aa).

The first 15 residues, 1–15 (MRLPTLFMLAAIATA), serve as a signal peptide directing secretion. Residues aspartate 132, aspartate 161, and aspartate 165 each contribute to the Ca(2+) site. Arginine 218 is a catalytic residue.

This sequence belongs to the polysaccharide lyase 1 family. Requires Ca(2+) as cofactor.

It localises to the secreted. It catalyses the reaction Eliminative cleavage of (1-&gt;4)-alpha-D-galacturonan to give oligosaccharides with 4-deoxy-alpha-D-galact-4-enuronosyl groups at their non-reducing ends.. Its function is as follows. Pectinolytic enzyme consist of four classes of enzymes: pectin lyase, polygalacturonase, pectin methylesterase and rhamnogalacturonase. Among pectinolytic enzymes, pectin lyase is the most important in depolymerization of pectin, since it cleaves internal glycosidic bonds of highly methylated pectins. Favors pectate, the anion, over pectin, the methyl ester. This chain is Probable pectate lyase B (plyB), found in Aspergillus terreus (strain NIH 2624 / FGSC A1156).